The sequence spans 525 residues: MAKAIMVQGTASHVGKSILVTALCRIFRQDGYRVVPFKAQNMALNSFVTADGGEMGRAQVLQAQAAGLEPAVEMNPVLLKPTGNAASQVIVLGKPVGNMSARDYHLGKNQDLLGIIEETLRRLHREYEIIVIEGAGSPAEVNLKERDLANMRVSRLAGAPVLLVADIDRGGALAAVVGTLALLEPEEAEQVRGIVINKFRGDRSLLDPALEFLEARTGKPVLGVLPYLQGLRLPAEDSVCLEEADTAAEGELEIAVLYLPRISNFTDFDSLALEPGVRLRYVKDGEPLGSPDLVIIPGTKNTTEDLLYLYETGYAAAVRRAAAQGIPVCGICGGYQMLGRELRDVEHSESFRDELPGLGLLDVVTTFVGEKILARARGEVCGGGPLFQEIAGLPVAGYEIHMGRTVLGEGTRPLLRVVEREGGGGGDFDGAVAPSGLVWGTYFHGIFDNDLLRAHLLGWLRRRRGLSQGTLEEKAGGGRGSTCLERELDRLAGAYRAHLNLEKIYALLGLPGPRLPRPGAGGGPK.

Residues 251–452 form the GATase cobBQ-type domain; that stretch reads ELEIAVLYLP…FHGIFDNDLL (202 aa). Cysteine 332 (nucleophile) is an active-site residue. The active site involves histidine 444.

The protein belongs to the CobB/CobQ family. CobQ subfamily.

The protein operates within cofactor biosynthesis; adenosylcobalamin biosynthesis. In terms of biological role, catalyzes amidations at positions B, D, E, and G on adenosylcobyrinic A,C-diamide. NH(2) groups are provided by glutamine, and one molecule of ATP is hydrogenolyzed for each amidation. In Pelotomaculum thermopropionicum (strain DSM 13744 / JCM 10971 / SI), this protein is Cobyric acid synthase.